Here is a 426-residue protein sequence, read N- to C-terminus: Dynein regulatory complex protein 10 (426 aa).

Disordered stretches follow at residues 18–37 and 399–426; these read TRIGPKTDPSKRPADPLKPL and SKKKRGKGKAKGKEKGKQKGKEKGKGKK. The IQ domain occupies 377 to 406; the sequence is MVRAATLIQAFWKGYLVRSLLRSKKKRGKG. The span at 399–408 shows a compositional bias: basic residues; the sequence is SKKKRGKGKA. The segment covering 409–426 has biased composition (basic and acidic residues); that stretch reads KGKEKGKQKGKEKGKGKK.

It belongs to the DRC10 family. As to quaternary structure, component of the nexin-dynein regulatory complex (N-DRC). Interacts with CFAP52.

The protein resides in the cytoplasm. Its subcellular location is the cytoskeleton. It localises to the flagellum axoneme. Component of the nexin-dynein regulatory complex (N-DRC), a key regulator of ciliary/flagellar motility which maintains the alignment and integrity of the distal axoneme and regulates microtubule sliding in motile axonemes. The chain is Dynein regulatory complex protein 10 (IQCD) from Macaca fascicularis (Crab-eating macaque).